The following is a 419-amino-acid chain: Inward rectifier potassium channel 16 (419 aa).

Topologically, residues 1 to 67 are cytoplasmic; it reads MSYYGSSYRI…MVDIFTTLVD (67 aa). Residues 68–94 form a helical membrane-spanning segment; sequence TKWRHMFVVFSLSYILSWLIFGSIFWL. The Extracellular portion of the chain corresponds to 95-117; that stretch reads IALHHGDLLSDPDITPCVDNVHS. The segment at residues 118-134 is an intramembrane region (helical; Pore-forming); sequence FTAAFLFSLETQTTIGY. The Selectivity filter motif lies at 131 to 136; sequence TIGYGY. Over 135 to 143 the chain is Extracellular; it reads GYRCVTEEC. A helical transmembrane segment spans residues 144-171; that stretch reads SVAVLTVILQSILSCIINTFIIGAALAK. The Cytoplasmic portion of the chain corresponds to 172 to 419; sequence MATARKRAQT…LNRISMESQM (248 aa). Phosphoserine is present on residues Ser-358, Ser-374, and Ser-376.

This sequence belongs to the inward rectifier-type potassium channel (TC 1.A.2.1) family. KCNJ16 subfamily. As to quaternary structure, it forms heteromeric channels with Kir4.1/KCNJ10; this interaction is required for KCNJ16 localization to the basolateral membrane in kidney cells. As a heteromer with KCNJ10, may interact with MAGI1; this interaction may facilitate KCNJ10/KCNJ16 potassium channel expression at the basolateral membrane in kidney cells. May form heteromers with Kir2.1/KCNJ2. Can form heteromeric channels with Kir4.2/KCNJ15. Expressed in the brain, testis, liver, spleen, kidney, submaxillary gland and adrenals. In the kidney, expressed in the epithelial cells of both proximal and distal convoluted tubules, in the endothelial cells surrounding glomerular capillaries and in the flattened parietal layer of Bowman's capsule.

Its subcellular location is the membrane. The protein resides in the basolateral cell membrane. It catalyses the reaction K(+)(in) = K(+)(out). With respect to regulation, channel activity is strongly regulated by variations of cytosolic pH; channels are activated by alkaline and inhibited by acidic pH values. Activated by phosphatidylinositol 4,5 biphosphate (PtdIns(4,5)P2). Its function is as follows. Inward rectifier potassium channels are characterized by a greater tendency to allow potassium to flow into the cell rather than out of it. Their voltage dependence is regulated by the concentration of extracellular potassium; as external potassium is raised, the voltage range of the channel opening shifts to more positive voltages. The inward rectification is mainly due to the blockage of outward current by internal magnesium. KCNJ16 may be involved in the regulation of fluid and pH balance. In the kidney, together with KCNJ10, mediates basolateral K(+) recycling in distal tubules; this process is critical for Na(+) reabsorption at the tubules. The sequence is that of Inward rectifier potassium channel 16 (Kcnj16) from Rattus norvegicus (Rat).